The sequence spans 743 residues: Acetyl-coenzyme A synthetase, chloroplastic/glyoxysomal (743 aa).

A chloroplast-targeting transit peptide spans 1 to 84; it reads MKIGSPSSPI…LNAVVLGESL (84 aa). Asp-613 is an active-site residue.

It belongs to the ATP-dependent AMP-binding enzyme family. In terms of tissue distribution, expressed in leaves, flower buds and young flowers.

The protein resides in the plastid. The protein localises to the chloroplast. It localises to the glyoxysome. The enzyme catalyses acetate + ATP + CoA = acetyl-CoA + AMP + diphosphate. Catalyzes the production of acetyl-CoA, an activated form of acetate that can be used for lipid synthesis or for energy generation. May play a limited role in the biosynthesis of lipids. This chain is Acetyl-coenzyme A synthetase, chloroplastic/glyoxysomal (ACS), found in Arabidopsis thaliana (Mouse-ear cress).